The following is a 427-amino-acid chain: Enolase (427 aa).

Gln-163 provides a ligand contact to (2R)-2-phosphoglycerate. Glu-205 (proton donor) is an active-site residue. Residues Asp-242, Glu-285, and Asp-312 each coordinate Mg(2+). Lys-337, Arg-366, Ser-367, and Lys-388 together coordinate (2R)-2-phosphoglycerate. Lys-337 serves as the catalytic Proton acceptor.

Belongs to the enolase family. Requires Mg(2+) as cofactor.

It localises to the cytoplasm. Its subcellular location is the secreted. The protein resides in the cell surface. The catalysed reaction is (2R)-2-phosphoglycerate = phosphoenolpyruvate + H2O. The protein operates within carbohydrate degradation; glycolysis; pyruvate from D-glyceraldehyde 3-phosphate: step 4/5. Functionally, catalyzes the reversible conversion of 2-phosphoglycerate (2-PG) into phosphoenolpyruvate (PEP). It is essential for the degradation of carbohydrates via glycolysis. This Burkholderia ambifaria (strain MC40-6) protein is Enolase.